The chain runs to 182 residues: pEARLI1-like lipid transfer protein 2 (182 aa).

The N-terminal stretch at 1-25 (MASKNSASLALFFALNILFFTLTAG) is a signal peptide. Residues 33–92 (SPKPRPLPNPKVPSPKVPTPSVPSPYVPTPSVPSPSVPTPSVPSPSVPSPNPTPVIPPRT) are compositionally biased toward pro residues. Positions 33–94 (SPKPRPLPNP…TPVIPPRTPG (62 aa)) are disordered. 7 consecutive repeat copies span residues 42 to 46 (PKVPS), 47 to 51 (PKVPT), 52 to 56 (PSVPS), 62 to 66 (PSVPS), 67 to 71 (PSVPT), 72 to 76 (PSVPS), and 77 to 81 (PSVPS). The interval 42–81 (PKVPSPKVPTPSVPSPYVPTPSVPSPSVPTPSVPSPSVPS) is 7 X 5 AA repeats of P-[KS]-V-P-[ST].

Belongs to the plant LTP family. PEARLI1 subfamily.

It is found in the secreted. It localises to the cell wall. In terms of biological role, probable lipid transfer protein (LTP). May improve freezing survival. Seems to control the flowering process and lignin synthesis. Confers resistance to Botrytis cinerea. This is pEARLI1-like lipid transfer protein 2 from Arabidopsis thaliana (Mouse-ear cress).